Consider the following 61-residue polypeptide: Hepcidin (61 aa).

Positions 1–24 (LQVLTEEVGSIDSPVGEHQQPGGE) are disordered. The propeptide occupies 1–34 (LQVLTEEVGSIDSPVGEHQQPGGESMRLPEHFRF). 4 cysteine pairs are disulfide-bonded: C43/C59, C46/C49, C47/X55, and C50/C58.

This sequence belongs to the hepcidin family.

Its subcellular location is the secreted. In terms of biological role, seems to act as a signaling molecule involved in the maintenance of iron homeostasis. Seems to be required in conjunction with HFE to regulate both intestinal iron absorption and iron storage in macrophages. May also have antimicrobial activity. This is Hepcidin (hamp) from Oncorhynchus mykiss (Rainbow trout).